A 248-amino-acid chain; its full sequence is N-acylneuraminate-9-phosphatase (248 aa).

Aspartate 12 contacts Mg(2+). 5 residues coordinate phosphate: leucine 13, aspartate 14, threonine 131, asparagine 132, and lysine 164. Aspartate 14 provides a ligand contact to Mg(2+). Aspartate 189 lines the Mg(2+) pocket.

The protein belongs to the HAD-like hydrolase superfamily. NANP family. Requires Mg(2+) as cofactor.

The enzyme catalyses N-acetylneuraminate 9-phosphate + H2O = N-acetylneuraminate + phosphate. The catalysed reaction is N-glycoloylneuraminate 9-phosphate + H2O = N-glycoloylneuraminate + phosphate. It functions in the pathway amino-sugar metabolism; N-acetylneuraminate biosynthesis. Inhibited by calcium. Inhibited by vanadate, sodium orthovanadate and phosphonate. In terms of biological role, catalyzes the dephosphorylation of N-acylneuraminate 9-phosphate (Neu5Ac-9-P) to N-acetylneuraminic acid (Neu5Ac or sialic acid). Can also use N-glycoloylneuraminate 9-phosphate as substrate. The chain is N-acylneuraminate-9-phosphatase from Rattus norvegicus (Rat).